Here is an 84-residue protein sequence, read N- to C-terminus: Apoptosis inhibitor Rv3654c (84 aa).

The first 39 residues, 1-39, serve as a signal peptide directing secretion; the sequence is MVARHRAQAAADLASLAAAARLPSGLAAACARATLVARA.

Interacts with human polypyrimidine tract binding protein-associated splicing factor (PSF).

The protein localises to the secreted. Its subcellular location is the host cytoplasm. In terms of biological role, effector protein that participates in the suppression of macrophage apoptosis by blocking the extrinsic pathway. Recognizes the host polypyrimidine tract binding protein-associated splicing factor (PSF), which probably leads to its cleavage, diminishing the level of caspase-8 in macrophages. This Mycobacterium tuberculosis (strain ATCC 25618 / H37Rv) protein is Apoptosis inhibitor Rv3654c.